Here is a 346-residue protein sequence, read N- to C-terminus: Large ribosomal subunit protein uL3 (346 aa).

The segment at 324–346 is disordered; that stretch reads KPPKKKPPVERPQITYVSRESKQ.

The protein belongs to the universal ribosomal protein uL3 family. In terms of assembly, part of the 50S ribosomal subunit. Forms a cluster with proteins L14 and L24e.

In terms of biological role, one of the primary rRNA binding proteins, it binds directly near the 3'-end of the 23S rRNA, where it nucleates assembly of the 50S subunit. The polypeptide is Large ribosomal subunit protein uL3 (Thermococcus gammatolerans (strain DSM 15229 / JCM 11827 / EJ3)).